A 296-amino-acid chain; its full sequence is UDP-N-acetylenolpyruvoylglucosamine reductase (296 aa).

The FAD-binding PCMH-type domain occupies Arg26–Ser191. The active site involves Arg170. The active-site Proton donor is Cys218. Glu287 is a catalytic residue.

This sequence belongs to the MurB family. The cofactor is FAD.

Its subcellular location is the cytoplasm. It catalyses the reaction UDP-N-acetyl-alpha-D-muramate + NADP(+) = UDP-N-acetyl-3-O-(1-carboxyvinyl)-alpha-D-glucosamine + NADPH + H(+). The protein operates within cell wall biogenesis; peptidoglycan biosynthesis. Cell wall formation. This Chlamydia felis (strain Fe/C-56) (Chlamydophila felis) protein is UDP-N-acetylenolpyruvoylglucosamine reductase.